The primary structure comprises 426 residues: Cytochrome b-c1 complex subunit 2, mitochondrial (426 aa).

A mitochondrion-targeting transit peptide spans 1–30; the sequence is MKSFTRNLRRFQTPRRNLHGISYTPKKVEG.

This sequence belongs to the peptidase M16 family. UQCRC2/QCR2 subfamily. Component of the ubiquinol-cytochrome c oxidoreductase (cytochrome b-c1 complex, complex III, CIII), a multisubunit enzyme composed of 3 respiratory subunits cytochrome b, cytochrome c1 and Rieske protein, 2 core protein subunits, and additional low-molecular weight protein subunits. The complex exists as an obligatory dimer and forms supercomplexes (SCs) in the inner mitochondrial membrane with cytochrome c oxidase (complex IV, CIV).

It is found in the mitochondrion inner membrane. Its function is as follows. Component of the ubiquinol-cytochrome c oxidoreductase, a multisubunit transmembrane complex that is part of the mitochondrial electron transport chain which drives oxidative phosphorylation. The respiratory chain contains 3 multisubunit complexes succinate dehydrogenase (complex II, CII), ubiquinol-cytochrome c oxidoreductase (cytochrome b-c1 complex, complex III, CIII) and cytochrome c oxidase (complex IV, CIV), that cooperate to transfer electrons derived from NADH and succinate to molecular oxygen, creating an electrochemical gradient over the inner membrane that drives transmembrane transport and the ATP synthase. The cytochrome b-c1 complex catalyzes electron transfer from ubiquinol to cytochrome c, linking this redox reaction to translocation of protons across the mitochondrial inner membrane, with protons being carried across the membrane as hydrogens on the quinol. In the process called Q cycle, 2 protons are consumed from the matrix, 4 protons are released into the intermembrane space and 2 electrons are passed to cytochrome c. This is Cytochrome b-c1 complex subunit 2, mitochondrial (qcr2) from Schizosaccharomyces pombe (strain 972 / ATCC 24843) (Fission yeast).